Consider the following 114-residue polypeptide: Probable 4-amino-4-deoxy-L-arabinose-phosphoundecaprenol flippase subunit ArnE (114 aa).

3 consecutive transmembrane segments (helical) span residues Pro-41 to Leu-61, Leu-64 to Ser-84, and Tyr-94 to Leu-114. Positions Leu-43–Gly-112 constitute an EamA domain.

Belongs to the ArnE family. Heterodimer of ArnE and ArnF.

It localises to the cell inner membrane. It participates in bacterial outer membrane biogenesis; lipopolysaccharide biosynthesis. Its function is as follows. Translocates 4-amino-4-deoxy-L-arabinose-phosphoundecaprenol (alpha-L-Ara4N-phosphoundecaprenol) from the cytoplasmic to the periplasmic side of the inner membrane. This chain is Probable 4-amino-4-deoxy-L-arabinose-phosphoundecaprenol flippase subunit ArnE, found in Aeromonas hydrophila subsp. hydrophila (strain ATCC 7966 / DSM 30187 / BCRC 13018 / CCUG 14551 / JCM 1027 / KCTC 2358 / NCIMB 9240 / NCTC 8049).